A 45-amino-acid chain; its full sequence is Photosystem II reaction center protein K (45 aa).

The propeptide occupies 1 to 8 (MEAALLLA). The chain crosses the membrane as a helical span at residues 24-44 (LPIIPVFFLLLAFVWQAAVGF).

It belongs to the PsbK family. In terms of assembly, PSII is composed of 1 copy each of membrane proteins PsbA, PsbB, PsbC, PsbD, PsbE, PsbF, PsbH, PsbI, PsbJ, PsbK, PsbL, PsbM, PsbT, PsbX, PsbY, PsbZ, Psb30/Ycf12, peripheral proteins PsbO, CyanoQ (PsbQ), PsbU, PsbV and a large number of cofactors. It forms dimeric complexes.

The protein localises to the cellular thylakoid membrane. In terms of biological role, one of the components of the core complex of photosystem II (PSII). PSII is a light-driven water:plastoquinone oxidoreductase that uses light energy to abstract electrons from H(2)O, generating O(2) and a proton gradient subsequently used for ATP formation. It consists of a core antenna complex that captures photons, and an electron transfer chain that converts photonic excitation into a charge separation. The sequence is that of Photosystem II reaction center protein K from Nostoc sp. (strain PCC 7120 / SAG 25.82 / UTEX 2576).